A 386-amino-acid chain; its full sequence is MATTKSFLILFFMILATTSSTCAKLEEMVTVLSIDGGGIKGIIPAIILEFLEGQLQEVDNNKDARLADYFDVIGGTSTGGLLTAMITTPNENNRPFAAAKDIVPFYFEHGPHIFNYSGSIFGPRYDGKYLLQVLQEKLGETRVHQALTEVAISSFDIKTNKPVIFTKSNLAKSPELDAKMYDICYSTAAAPIYFPPHHFVTHTSNGATYEFNLVDGGVATVGDPALLSLSVATRLAQEDPAFSSIKSLDYKQMLLLSLGTGTNSEFDKTYTAEEAAKWGPLRWMLAIQQMTNAASSYMTDYYISTVFQARHSQNNYLRVQENALNGTTTEMDDASEANMELLVQVGETLLKKPVSKDSPETYEEALKRFAKLLSDRKKLRANKASY.

The signal sequence occupies residues 1 to 23 (MATTKSFLILFFMILATTSSTCA). The 198-residue stretch at 32–229 (LSIDGGGIKG…TVGDPALLSL (198 aa)) folds into the PNPLA domain. The GXGXXG motif lies at 36–41 (GGGIKG). The GXSXG signature appears at 75–79 (GTSTG). The active-site Nucleophile is S77. An N-linked (GlcNAc...) asparagine glycan is attached at N115. The active-site Proton acceptor is the D215. The DGA/G signature appears at 215–217 (DGG). The stretch at 321–384 (ENALNGTTTE…DRKKLRANKA (64 aa)) forms a coiled coil. N325 carries N-linked (GlcNAc...) asparagine glycosylation.

Belongs to the patatin family. Tuber.

It is found in the vacuole. Its function is as follows. Probable lipolytic acyl hydrolase (LAH), an activity which is thought to be involved in the response of tubers to pathogens. The sequence is that of Patatin-04/09 from Solanum tuberosum (Potato).